Here is a 316-residue protein sequence, read N- to C-terminus: Very long chain fatty acid elongase 6 (316 aa).

A glycan (N-linked (GlcNAc...) asparagine) is linked at Asn11. 6 helical membrane passes run 30 to 50 (WMLENWTWVFYYCGIYMLVIF), 64 to 84 (LRGPLIIWNTLLAMFSIMGAA), 117 to 137 (FWTWLFVLSKLPELGDTIFIV), 142 to 162 (PLIFLHWYHHITVLIYSWFSY), 167 to 189 (SSARWFIVMNYCVHSVMYSYYAL), and 202 to 222 (MIITSLQLAQMIIGCAINVWA). N-linked (GlcNAc...) asparagine glycosylation is present at Asn242. The chain crosses the membrane as a helical span at residues 245–265 (IAMYSSYFVLFARFFYKAYLA).

It belongs to the ELO family. ELOVL6 subfamily. In terms of tissue distribution, detected in the CNS (central nervous system) of third larval instar (at protein level). Expressed in cyst progenitor cells (at protein level). In the adult fly, expressed in several tissues including, sperm, follicular epithelium, nurse cells and cyst cells.

The protein localises to the mitochondrion outer membrane. It is found in the endoplasmic reticulum membrane. The enzyme catalyses a very-long-chain acyl-CoA + malonyl-CoA + H(+) = a very-long-chain 3-oxoacyl-CoA + CO2 + CoA. It carries out the reaction hexadecanoyl-CoA + malonyl-CoA + H(+) = 3-oxooctadecanoyl-CoA + CO2 + CoA. The protein operates within lipid metabolism; fatty acid biosynthesis. Its function is as follows. Catalyzes the first and rate-limiting reaction of the four reactions that constitute the long-chain fatty acids elongation cycle. This process allows the addition of 2 carbons to the chain of long- and very long-chain fatty acids (VLCFAs) per cycle. Condensing enzyme that elongates fatty acids with 12, 14 and 16 carbons with higher activity toward C16:0 acyl-CoAs. Catalyzes the synthesis of unsaturated C16 long chain fatty acids and, to a lesser extent, C18:0 and those with low desaturation degree. May participate in the production of saturated and monounsaturated VLCFAs of different chain lengths that are involved in multiple biological processes as precursors of membrane lipids and lipid mediators. The sequence is that of Very long chain fatty acid elongase 6 from Drosophila melanogaster (Fruit fly).